The chain runs to 154 residues: Protein Smg homolog (154 aa).

This sequence belongs to the Smg family.

This is Protein Smg homolog from Aromatoleum aromaticum (strain DSM 19018 / LMG 30748 / EbN1) (Azoarcus sp. (strain EbN1)).